A 467-amino-acid chain; its full sequence is Gustatory and odorant receptor 22 (467 aa).

At 1–106 (MIHTQMEDAQ…MPRTTFTWCS (106 aa)) the chain is on the cytoplasmic side. Residues 107–127 (KAFLWAYFIYACETVIVLVVA) traverse the membrane as a helical segment. The Extracellular segment spans residues 128 to 144 (RERINKFISTSDKRFDE). The helical transmembrane segment at 145–165 (VIYNIIFMSIMVPHFLLPVAS) threads the bilayer. At 166-198 (WRNGSEVAKFKNMWTDFQYKYLIVTGKPIVFPK) the chain is on the cytoplasmic side. A helical transmembrane segment spans residues 199–219 (LYPITWTLCIVSWSLSLVIIL). Over 220 to 238 (SQYYLQPDFQFCHTFAYYH) the chain is Extracellular. Residues 239–259 (IIAMLNGFCSLWFVNCTAFGT) form a helical membrane-spanning segment. Residues 260-304 (ASKAFAKELTDVLATERPAAKLTEYRHLWVDLSHMMQQLGKAYSN) lie on the Cytoplasmic side of the membrane. The chain crosses the membrane as a helical span at residues 305–325 (MYGIYCLVIFFTTIIATYGSL). Over 326-337 (SEIIEHGATYKE) the chain is Extracellular. A helical transmembrane segment spans residues 338–358 (VGLFVIVFYCMSLLFIICNEA). Residues 359 to 414 (HHASKRVGLNFQERLLNVNLTAVDKATQKEVEMFLVAIDKNPPTMNLDGYANINRG) are Cytoplasmic-facing. The helical transmembrane segment at 415–435 (LITSNISFMATYLVVLMQFKL) threads the bilayer. The Extracellular portion of the chain corresponds to 436-467 (TLLRQSAKNAFISALKANLSRIRSLDADKVNT). An N-linked (GlcNAc...) asparagine glycan is attached at asparagine 453.

This sequence belongs to the insect chemoreceptor superfamily. Gustatory receptor (GR) family. Gr21a subfamily. Carbon dioxide-responsive neurons coexpress GPRgr22 and GPRgr24 in the maxillary palp at both larval and adult life stages.

The protein localises to the cell membrane. Its function is as follows. Gustatory receptor which mediates acceptance or avoidance behavior, depending on its substrates. GPRgr22 and GPRgr24 together are sufficient for olfactory carbon dioxide-chemosensation. In Anopheles gambiae (African malaria mosquito), this protein is Gustatory and odorant receptor 22.